The chain runs to 21 residues: Natriuretic peptide TsNP (21 aa).

Residues Cys5 and Cys21 are joined by a disulfide bond.

As to expression, expressed by the venom gland.

The protein localises to the secreted. Scorpion venom natriuretic peptide that increases the perfusion pressure, glomerular filtration rate and urinary flow in the isolated perfused rat kidney assay. Induces a decrease of the percentages of renal transport for sodium, potassium and chloride and an increase of the urinary cGMP concentration. Also down-regulates the mRNA expression of natriuretic peptide receptor 1 (NPR1) in the kidneys whereas it up-regulates those of NPR2, NPR3 and guanylyl cyclase C (GUCY2C) mRNAs. May exhibit hypotensive and vasodepressor activities. The chain is Natriuretic peptide TsNP from Tityus serrulatus (Brazilian scorpion).